Consider the following 374-residue polypeptide: Palmitoyltransferase PFA5 (374 aa).

Topologically, residues Met1–Ser13 are cytoplasmic. A helical membrane pass occupies residues Trp14–Tyr34. The Lumenal segment spans residues Cys35 to Gly55. Residues Leu56 to Ile76 traverse the membrane as a helical segment. At Leu77 to Leu173 the chain is on the cytoplasmic side. The region spanning Ile129–Ala179 is the DHHC domain. Residues Phe174–Val194 traverse the membrane as a helical segment. At Tyr195–Thr217 the chain is on the lumenal side. Residues Leu218–Tyr238 traverse the membrane as a helical segment. Topologically, residues Met239–Tyr374 are cytoplasmic.

The protein belongs to the DHHC palmitoyltransferase family. PFA5 subfamily. Post-translationally, autopalmitoylated.

It is found in the membrane. It carries out the reaction L-cysteinyl-[protein] + hexadecanoyl-CoA = S-hexadecanoyl-L-cysteinyl-[protein] + CoA. The chain is Palmitoyltransferase PFA5 (PFA5) from Saccharomyces cerevisiae (strain ATCC 204508 / S288c) (Baker's yeast).